The following is a 137-amino-acid chain: Histone H2B (137 aa).

The segment covering 1–10 (MAPKAADKKP) has biased composition (basic and acidic residues). The segment at 1 to 45 (MAPKAADKKPASKAPATASKAPEKKDAGKKTAPSGDKKKRTKARK) is disordered. N6-acetyllysine; alternate occurs at positions 8 and 9. Glycyl lysine isopeptide (Lys-Gly) (interchain with G-Cter in SUMO); alternate cross-links involve residues K8 and K9. Phosphoserine is present on S12. An N6-acetyllysine modification is found at K13. K24 carries the N6-acetyllysine; alternate modification. A Glycyl lysine isopeptide (Lys-Gly) (interchain with G-Cter in SUMO); alternate cross-link involves residue K24. K25 participates in a covalent cross-link: Glycyl lysine isopeptide (Lys-Gly) (interchain with G-Cter in SUMO). Residue K131 forms a Glycyl lysine isopeptide (Lys-Gly) (interchain with G-Cter in ubiquitin) linkage.

This sequence belongs to the histone H2B family. The nucleosome is a histone octamer containing two molecules each of H2A, H2B, H3 and H4 assembled in one H3-H4 heterotetramer and two H2A-H2B heterodimers. The octamer wraps approximately 147 bp of DNA. In terms of processing, monoubiquitinated by the UBC2-BRE1 complex to form H2BK123ub1. H2BK123ub1 gives a specific tag for epigenetic transcriptional activation and is also prerequisite for H3K4me and H3K79me formation. H2BK123ub1 also modulates the formation of double-strand breaks during meiosis and is a prerequisite for DNA-damage checkpoint activation. Post-translationally, phosphorylated to form H2BS10ph during progression through meiotic prophase. May be correlated with chromosome condensation. Acetylated by GCN5 to form H2BK11ac and H2BK16ac. H2BK16ac can also be formed by ESA1. Acetylation of N-terminal lysines and particularly formation of H2BK11acK16ac has a positive effect on transcription. In terms of processing, sumoylation to form H2BK6su or H2BK7su, and probably also H2BK16su or H2BK17su, occurs preferentially near the telomeres and represses gene transcription.

The protein resides in the nucleus. Its subcellular location is the chromosome. Core component of nucleosome. Nucleosomes wrap and compact DNA into chromatin, limiting DNA accessibility to the cellular machineries which require DNA as a template. Histones thereby play a central role in transcription regulation, DNA repair, DNA replication and chromosomal stability. DNA accessibility is regulated via a complex set of post-translational modifications of histones, also called histone code, and nucleosome remodeling. This is Histone H2B (HTB1) from Chaetomium globosum (strain ATCC 6205 / CBS 148.51 / DSM 1962 / NBRC 6347 / NRRL 1970) (Soil fungus).